Here is a 184-residue protein sequence, read N- to C-terminus: Ribosome-recycling factor (184 aa).

This sequence belongs to the RRF family.

The protein localises to the cytoplasm. Responsible for the release of ribosomes from messenger RNA at the termination of protein biosynthesis. May increase the efficiency of translation by recycling ribosomes from one round of translation to another. This chain is Ribosome-recycling factor, found in Leptospira borgpetersenii serovar Hardjo-bovis (strain JB197).